The sequence spans 360 residues: Probable dual-specificity RNA methyltransferase RlmN (360 aa).

The Proton acceptor role is filled by Glu-97. In terms of domain architecture, Radical SAM core spans 103 to 330 (DGDRLTFCIS…TAVRRSRGLD (228 aa)). Cysteines 110 and 335 form a disulfide. Residues Cys-117, Cys-121, and Cys-124 each coordinate [4Fe-4S] cluster. S-adenosyl-L-methionine-binding positions include 165-166 (GE), Ser-197, 220-222 (SIH), and His-292. Catalysis depends on Cys-335, which acts as the S-methylcysteine intermediate.

It belongs to the radical SAM superfamily. RlmN family. [4Fe-4S] cluster is required as a cofactor.

It is found in the cytoplasm. It catalyses the reaction adenosine(2503) in 23S rRNA + 2 reduced [2Fe-2S]-[ferredoxin] + 2 S-adenosyl-L-methionine = 2-methyladenosine(2503) in 23S rRNA + 5'-deoxyadenosine + L-methionine + 2 oxidized [2Fe-2S]-[ferredoxin] + S-adenosyl-L-homocysteine. The enzyme catalyses adenosine(37) in tRNA + 2 reduced [2Fe-2S]-[ferredoxin] + 2 S-adenosyl-L-methionine = 2-methyladenosine(37) in tRNA + 5'-deoxyadenosine + L-methionine + 2 oxidized [2Fe-2S]-[ferredoxin] + S-adenosyl-L-homocysteine. Functionally, specifically methylates position 2 of adenine 2503 in 23S rRNA and position 2 of adenine 37 in tRNAs. This is Probable dual-specificity RNA methyltransferase RlmN from Gemmatimonas aurantiaca (strain DSM 14586 / JCM 11422 / NBRC 100505 / T-27).